The chain runs to 140 residues: Austinoid biosynthesis clusters protein S (140 aa).

It belongs to the trt14 isomerase family. As to quaternary structure, homodimer.

It participates in secondary metabolite biosynthesis; terpenoid biosynthesis. Functionally, part of the gene cluster B that mediates the biosynthesis of austinol and dehydroaustinol, two fungal meroterpenoids. The first step of the pathway is the synthesis of 3,5-dimethylorsellinic acid by the polyketide synthase ausA. 3,5-dimethylorsellinic acid is then prenylated by the polyprenyl transferase ausN. Further epoxidation by the FAD-dependent monooxygenase ausM and cyclization by the probable terpene cyclase ausL lead to the formation of protoaustinoid A. Protoaustinoid A is then oxidized to spiro-lactone preaustinoid A3 by the combined action of the FAD-binding monooxygenases ausB and ausC, and the dioxygenase ausE. Acid-catalyzed keto-rearrangement and ring contraction of the tetraketide portion of preaustinoid A3 by ausJ lead to the formation of preaustinoid A4. The aldo-keto reductase ausK, with the help of ausH, is involved in the next step by transforming preaustinoid A4 into isoaustinone which is in turn hydroxylated by the P450 monooxygenase ausI to form austinolide. Finally, the cytochrome P450 monooxygenase ausG modifies austinolide to austinol. Austinol can be further modified to dehydroaustinol which forms a diffusible complex with diorcinol that initiates conidiation. Due to genetic rearrangements of the clusters and the subsequent loss of some enzymes, the end products of the Emericella nidulans austinoid biosynthesis clusters are austinol and dehydroaustinol, even if additional enzymes, such as the O-acetyltransferase ausQ and the cytochrome P450 monooxygenase ausR are still functional. AusS is necessary for austinoids production and may play a possible function as a regulator. The protein is Austinoid biosynthesis clusters protein S of Emericella nidulans (strain FGSC A4 / ATCC 38163 / CBS 112.46 / NRRL 194 / M139) (Aspergillus nidulans).